Consider the following 434-residue polypeptide: Serine hydroxymethyltransferase (434 aa).

(6S)-5,6,7,8-tetrahydrofolate contacts are provided by residues Leu124 and 128–130 (GHL). N6-(pyridoxal phosphate)lysine is present on Lys233. Residue Glu249 coordinates (6S)-5,6,7,8-tetrahydrofolate.

Belongs to the SHMT family. In terms of assembly, homodimer. Pyridoxal 5'-phosphate serves as cofactor.

The protein resides in the cytoplasm. It carries out the reaction (6R)-5,10-methylene-5,6,7,8-tetrahydrofolate + glycine + H2O = (6S)-5,6,7,8-tetrahydrofolate + L-serine. It functions in the pathway one-carbon metabolism; tetrahydrofolate interconversion. It participates in amino-acid biosynthesis; glycine biosynthesis; glycine from L-serine: step 1/1. Catalyzes the reversible interconversion of serine and glycine with tetrahydrofolate (THF) serving as the one-carbon carrier. This reaction serves as the major source of one-carbon groups required for the biosynthesis of purines, thymidylate, methionine, and other important biomolecules. Also exhibits THF-independent aldolase activity toward beta-hydroxyamino acids, producing glycine and aldehydes, via a retro-aldol mechanism. This chain is Serine hydroxymethyltransferase, found in Synechococcus sp. (strain JA-3-3Ab) (Cyanobacteria bacterium Yellowstone A-Prime).